The chain runs to 414 residues: Putative nickel insertion protein (414 aa).

Positions 70 to 91 (ATHHDHDHSQDQTHHHHADHAP) are disordered.

Belongs to the LarC family.

This Picosynechococcus sp. (strain ATCC 27264 / PCC 7002 / PR-6) (Agmenellum quadruplicatum) protein is Putative nickel insertion protein.